Reading from the N-terminus, the 213-residue chain is Ras-related protein Rab-4B (213 aa).

Ala-2 is modified (N-acetylalanine). GDP is bound by residues Gly-18, Thr-19, Gly-20, Lys-21, Ser-22, and Cys-23. Gly-18, Thr-19, Gly-20, Lys-21, Ser-22, Cys-23, Ser-37, His-39, and Thr-40 together coordinate GTP. Ser-22 lines the Mg(2+) pocket. The Switch 1 signature appears at 39–44; sequence HTIGVE. Residues Thr-40 and Asp-63 each contribute to the Mg(2+) site. The Switch 2 motif lies at 65-74; it reads AGQERFRSVT. Gly-66 is a binding site for GTP. Gln-67 carries the 5-glutamyl serotonin modification. Residues Asn-121, Lys-122, Asp-124, Ala-152, and Leu-153 each contribute to the GDP site. GTP is bound by residues Asn-121, Lys-122, Asp-124, Ala-152, and Leu-153. Ser-185 and Ser-193 each carry phosphoserine. 2 S-geranylgeranyl cysteine lipidation sites follow: Cys-211 and Cys-213. Cys-213 carries the post-translational modification Cysteine methyl ester.

It belongs to the small GTPase superfamily. Rab family. As to quaternary structure, interacts (GTP-bound form) with RUFY1; the interaction allows endosomal tethering and fusion. Requires Mg(2+) as cofactor. Post-translationally, serotonylation of Gln-67 by TGM2 during activation and aggregation of platelets leads to constitutive activation of GTPase activity.

Its subcellular location is the cell membrane. The protein localises to the early endosome membrane. The catalysed reaction is GTP + H2O = GDP + phosphate + H(+). Regulated by guanine nucleotide exchange factors (GEFs) which promote the exchange of bound GDP for free GTP. Regulated by GTPase activating proteins (GAPs) which increase the GTP hydrolysis activity. Inhibited by GDP dissociation inhibitors (GDIs). In terms of biological role, the small GTPases Rab are key regulators of intracellular membrane trafficking, from the formation of transport vesicles to their fusion with membranes. Rabs cycle between an inactive GDP-bound form and an active GTP-bound form that is able to recruit to membranes different set of downstream effectors directly responsible for vesicle formation, movement, tethering and fusion. RAB4B mediates endosomal tethering and fusion through the interaction with RUFY1 and RAB14. Acts as a regulator of platelet alpha-granule release during activation and aggregation of platelets. The polypeptide is Ras-related protein Rab-4B (Homo sapiens (Human)).